The chain runs to 343 residues: Melanoma-associated antigen B18 (343 aa).

Positions 1-17 are enriched in basic residues; sequence MPRGQKSKLRAREKRHQ. The tract at residues 1 to 102 is disordered; the sequence is MPRGQKSKLR…LGSSREAEGW (102 aa). Residues 67 to 87 show a composition bias toward polar residues; sequence APSTTNAIAPVSCSSNEGASS. Positions 88-102 are enriched in basic and acidic residues; it reads QDEKSLGSSREAEGW. Residues 100 to 343 are interaction with LNX1; it reads EGWKEDPLNK…TTSSSFSHAK (244 aa). An MAGE domain is found at 107-306; the sequence is LNKKVVSLVH…SAFPSCYEEA (200 aa). The tract at residues 313-343 is disordered; the sequence is RTQARAAARAHTAAMANARSRTTSSSFSHAK. Residues 316–333 are compositionally biased toward low complexity; the sequence is ARAAARAHTAAMANARSR. Over residues 334-343 the composition is skewed to polar residues; it reads TTSSSFSHAK.

As to quaternary structure, interacts with LNX1.

It localises to the cytoplasm. Functionally, may enhance ubiquitin ligase activity of RING-type zinc finger-containing E3 ubiquitin-protein ligases. Proposed to act through recruitment and/or stabilization of the Ubl-conjugating enzyme (E2) at the E3:substrate complex. This chain is Melanoma-associated antigen B18 (MAGEB18), found in Homo sapiens (Human).